The primary structure comprises 394 residues: RILP-like protein 1 (394 aa).

Residues 2–89 (EGISALEKNV…RLERMDRIEK (88 aa)) form the RH1 domain. Residues 68–327 (EMEELRLELD…EAEEENKLPQ (260 aa)) adopt a coiled-coil conformation. One can recognise an RH2 domain in the interval 282 to 347 (RPRFTLQELR…IPQESGIKRL (66 aa)).

It belongs to the RILPL family.

Its subcellular location is the cytoplasm. It is found in the cytosol. The protein resides in the cytoskeleton. It localises to the microtubule organizing center. The protein localises to the centrosome. Its subcellular location is the cell projection. It is found in the cilium. Its function is as follows. Plays a role in the regulation of cell shape and polarity. Plays a role in cellular protein transport, including protein transport away from primary cilia. Neuroprotective protein. The sequence is that of RILP-like protein 1 (rilpl1) from Xenopus laevis (African clawed frog).